The sequence spans 211 residues: 3,4-dihydroxy-2-butanone 4-phosphate synthase (211 aa).

Residues 37 to 38 (RE), aspartate 42, 150 to 154 (RIGHT), and glutamate 174 contribute to the D-ribulose 5-phosphate site. Glutamate 38 contributes to the Mg(2+) binding site. Mg(2+) is bound at residue histidine 153.

The protein belongs to the DHBP synthase family. As to quaternary structure, homodimer. Mg(2+) serves as cofactor. Mn(2+) is required as a cofactor.

The enzyme catalyses D-ribulose 5-phosphate = (2S)-2-hydroxy-3-oxobutyl phosphate + formate + H(+). It participates in cofactor biosynthesis; riboflavin biosynthesis; 2-hydroxy-3-oxobutyl phosphate from D-ribulose 5-phosphate: step 1/1. In terms of biological role, catalyzes the conversion of D-ribulose 5-phosphate to formate and 3,4-dihydroxy-2-butanone 4-phosphate. This is 3,4-dihydroxy-2-butanone 4-phosphate synthase from Buchnera aphidicola subsp. Baizongia pistaciae (strain Bp).